The chain runs to 61 residues: Lens epithelial cell protein LEP503 (61 aa).

The protein is Lens epithelial cell protein LEP503 (Lenep) of Mus musculus (Mouse).